The chain runs to 75 residues: Tautomerase PptA (75 aa).

The active-site Proton acceptor; via imino nitrogen is Pro-2.

It belongs to the 4-oxalocrotonate tautomerase family. PptA subfamily. In terms of assembly, homodimer.

It is found in the cytoplasm. This Klebsiella pneumoniae (strain 342) protein is Tautomerase PptA.